The sequence spans 337 residues: Ornithine carbamoyltransferase, catabolic (337 aa).

Carbamoyl phosphate-binding positions include 57-60 (STRT), Gln-84, Arg-108, and 135-138 (HPTQ). Residues Asn-167, Asp-231, and 235–236 (SM) contribute to the L-ornithine site. Carbamoyl phosphate is bound by residues 272-273 (CL) and Arg-317.

This sequence belongs to the aspartate/ornithine carbamoyltransferase superfamily. OTCase family.

Its subcellular location is the cytoplasm. It carries out the reaction carbamoyl phosphate + L-ornithine = L-citrulline + phosphate + H(+). The protein operates within amino-acid degradation; L-arginine degradation via ADI pathway; carbamoyl phosphate from L-arginine: step 2/2. Functionally, reversibly catalyzes the transfer of the carbamoyl group from carbamoyl phosphate (CP) to the N(epsilon) atom of ornithine (ORN) to produce L-citrulline. In Streptococcus pyogenes serotype M1, this protein is Ornithine carbamoyltransferase, catabolic (arcB).